The following is a 194-amino-acid chain: WASH complex subunit 3 (194 aa).

Met-1 bears the N-acetylmethionine mark. Residues 46–74 (TVCEEKLADLSLRIQQIETTLNILDAKLS) adopt a coiled-coil conformation. Disordered stretches follow at residues 93-121 (SVTNGAHPEATSEQPQQNSTQDSGLQESE) and 159-194 (EGLDPDLLERPDAPVPDGESEKTVEESSDSESSFSD). The span at 103 to 121 (TSEQPQQNSTQDSGLQESE) shows a compositional bias: polar residues.

The protein belongs to the CCDC53 family. In terms of assembly, component of the WASH core complex also described as WASH regulatory complex (SHRC) composed of WASH (WASHC1, WASH2P or WASH3P), WASHC2 (WASHC2A or WASHC2C), WASHC3, WASHC4 and WASHC5. The WASH core complex associates via WASHC2 with the F-actin-capping protein dimer (formed by CAPZA1, CAPZA2 or CAPZA3 and CAPZB) in a transient or substoichiometric manner which was initially described as WASH complex.

It localises to the early endosome. Its function is as follows. Acts as a component of the WASH core complex that functions as a nucleation-promoting factor (NPF) at the surface of endosomes, where it recruits and activates the Arp2/3 complex to induce actin polymerization, playing a key role in the fission of tubules that serve as transport intermediates during endosome sorting. This Homo sapiens (Human) protein is WASH complex subunit 3.